The sequence spans 355 residues: MNGTEGINFYVPMSNKTGVVRSPFEYPQYYLAEPWKYRLVCCYIFFLISTGLPINLLTLLVTFKHKKLRQPLNYILVNLAVADLFMACFGFTVTFYTAWNGYFVFGPVGCAVEGFFATLGGQVALWSLVVLAIERYIVVCKPMGNFRFSATHAMMGIAFTWVMAFSCAAPPLFGWSRYMPEGMQCSCGPDYYTHNPDYHNESYVLYMFVIHFIIPVVVIFFSYGRLICKVREAAAQQQESATTQKAEKEVTRMVILMVLGFMLAWTPYAVVAFWIFTNKGADFTATLMAVPAFFSKSSSLYNPIIYVLMNKQFRNCMITTICCGKNPFGDEDVSSTVSQSKTEVSSVSSSQVSPA.

Over Met1–Lys36 the chain is Extracellular. Asn2 and Asn15 each carry an N-linked (GlcNAc...) asparagine glycan. Residues Tyr37–Val61 form a helical membrane-spanning segment. Residues Thr62 to Asn73 are Cytoplasmic-facing. A helical membrane pass occupies residues Tyr74–Trp99. The Extracellular segment spans residues Asn100 to Glu113. A disulfide bridge links Cys110 with Cys187. Residues Gly114–Ile133 form a helical membrane-spanning segment. At Glu134–His152 the chain is on the cytoplasmic side. The chain crosses the membrane as a helical span at residues Ala153–Ser176. The Extracellular segment spans residues Arg177–Ser202. The chain crosses the membrane as a helical span at residues Tyr203–Val230. Topologically, residues Arg231–Arg252 are cytoplasmic. Residues Met253–Phe276 form a helical membrane-spanning segment. Topologically, residues Thr277–Thr284 are extracellular. A helical transmembrane segment spans residues Ala285–Met309. Lys296 is modified (N6-(retinylidene)lysine). Residues Asn310–Ala355 are Cytoplasmic-facing.

The protein belongs to the G-protein coupled receptor 1 family. Opsin subfamily. Post-translationally, phosphorylated on some or all of the serine and threonine residues present in the C-terminal region. The color pigments are found in the cone photoreceptor cells.

Its subcellular location is the membrane. Functionally, visual pigments are the light-absorbing molecules that mediate vision. They consist of an apoprotein, opsin, covalently linked to cis-retinal. This is Green-sensitive opsin (PRA1) from Gallus gallus (Chicken).